We begin with the raw amino-acid sequence, 130 residues long: Small ribosomal subunit protein uS11 (130 aa).

Belongs to the universal ribosomal protein uS11 family. As to quaternary structure, part of the 30S ribosomal subunit. Interacts with proteins S7 and S18. Binds to IF-3.

Located on the platform of the 30S subunit, it bridges several disparate RNA helices of the 16S rRNA. Forms part of the Shine-Dalgarno cleft in the 70S ribosome. The sequence is that of Small ribosomal subunit protein uS11 from Thermotoga petrophila (strain ATCC BAA-488 / DSM 13995 / JCM 10881 / RKU-1).